We begin with the raw amino-acid sequence, 484 residues long: tRNA sulfurtransferase (484 aa).

In terms of domain architecture, THUMP spans 63 to 167 (ERLVEALKCI…NKDLFIVTQR (105 aa)). Residues 185–186 (LM), Lys-267, Gly-289, and Gln-298 contribute to the ATP site. A disulfide bridge connects residues Cys-346 and Cys-458. A Rhodanese domain is found at 406–484 (IPENAVVVDI…GFKNVKVYRP (79 aa)). Cys-458 acts as the Cysteine persulfide intermediate in catalysis.

Belongs to the ThiI family.

The protein localises to the cytoplasm. It catalyses the reaction [ThiI sulfur-carrier protein]-S-sulfanyl-L-cysteine + a uridine in tRNA + 2 reduced [2Fe-2S]-[ferredoxin] + ATP + H(+) = [ThiI sulfur-carrier protein]-L-cysteine + a 4-thiouridine in tRNA + 2 oxidized [2Fe-2S]-[ferredoxin] + AMP + diphosphate. It carries out the reaction [ThiS sulfur-carrier protein]-C-terminal Gly-Gly-AMP + S-sulfanyl-L-cysteinyl-[cysteine desulfurase] + AH2 = [ThiS sulfur-carrier protein]-C-terminal-Gly-aminoethanethioate + L-cysteinyl-[cysteine desulfurase] + A + AMP + 2 H(+). It participates in cofactor biosynthesis; thiamine diphosphate biosynthesis. In terms of biological role, catalyzes the ATP-dependent transfer of a sulfur to tRNA to produce 4-thiouridine in position 8 of tRNAs, which functions as a near-UV photosensor. Also catalyzes the transfer of sulfur to the sulfur carrier protein ThiS, forming ThiS-thiocarboxylate. This is a step in the synthesis of thiazole, in the thiamine biosynthesis pathway. The sulfur is donated as persulfide by IscS. The chain is tRNA sulfurtransferase from Colwellia psychrerythraea (strain 34H / ATCC BAA-681) (Vibrio psychroerythus).